Consider the following 101-residue polypeptide: Replication restart protein PriB (101 aa).

The region spanning 1–101 is the SSB domain; that stretch reads MTTNSLVLSG…IHAENVELKT (101 aa).

Belongs to the PriB family. As to quaternary structure, homodimer. Interacts with PriA and DnaT. Component of the replication restart primosome. Primosome assembly occurs via a 'hand-off' mechanism. PriA binds to replication forks, subsequently PriB then DnaT bind; DnaT then displaces ssDNA to generate the helicase loading substrate.

Its function is as follows. Involved in the restart of stalled replication forks, which reloads the replicative helicase on sites other than the origin of replication; the PriA-PriB pathway is the major replication restart pathway. During primosome assembly it facilitates complex formation between PriA and DnaT on DNA; stabilizes PriA on DNA. Stimulates the DNA unwinding activity of PriA helicase. In Shewanella putrefaciens (strain CN-32 / ATCC BAA-453), this protein is Replication restart protein PriB.